We begin with the raw amino-acid sequence, 247 residues long: Phycocyanobilin:ferredoxin oxidoreductase (247 aa).

The protein belongs to the HY2 family.

The enzyme catalyses (2R,3Z)-phycocyanobilin + 4 oxidized [2Fe-2S]-[ferredoxin] = biliverdin IXalpha + 4 reduced [2Fe-2S]-[ferredoxin] + 4 H(+). Its function is as follows. Catalyzes the four-electron reduction of biliverdin IX-alpha (2-electron reduction at both the A and D rings); the reaction proceeds via an isolatable 2-electron intermediate, 181,182-dihydrobiliverdin. The chain is Phycocyanobilin:ferredoxin oxidoreductase from Synechococcus sp. (strain CC9605).